Reading from the N-terminus, the 246-residue chain is Transcription factor A, mitochondrial (246 aa).

Residues 1–42 constitute a mitochondrion transit peptide; the sequence is MAFLRSMWGVLSALGRSGAELCTGCGSRLRSPFSFVYLPRWF. A DNA-binding region (HMG box 1) is located at residues 50-118; it reads PKKPVSSYLR…VYKEEISRFK (69 aa). S55, S56, and S61 each carry phosphoserine; by PKA. T122 carries the phosphothreonine modification. Positions 155–219 form a DNA-binding region, HMG box 2; that stretch reads PKRPRSAYNV…RYHNEMKSWE (65 aa). S160 is modified (phosphoserine; by PKA). S193 and S195 each carry phosphoserine.

As to quaternary structure, monomer; binds DNA as a monomer. Homodimer. Component of the mitochondrial transcription initiation complex, composed at least of TFB2M, TFAM and POLRMT. In this complex TFAM recruits POLRMT to the promoter whereas TFB2M induces structural changes in POLRMT to enable promoter opening and trapping of the DNA non-template strand. Upon metabolic stress, forms a complex composed of FOXO3, SIRT3, TFAM and POLRMT. Interacts with TFB1M and TFB2M. Interacts with CLPX; this enhances DNA-binding. In terms of processing, phosphorylation by PKA within the HMG box 1 impairs DNA binding and promotes degradation by the AAA+ Lon protease.

It localises to the mitochondrion. Its subcellular location is the mitochondrion matrix. The protein localises to the mitochondrion nucleoid. Functionally, binds to the mitochondrial light strand promoter and functions in mitochondrial transcription regulation. Component of the mitochondrial transcription initiation complex, composed at least of TFB2M, TFAM and POLRMT that is required for basal transcription of mitochondrial DNA. In this complex, TFAM recruits POLRMT to a specific promoter whereas TFB2M induces structural changes in POLRMT to enable promoter opening and trapping of the DNA non-template strand. Required for accurate and efficient promoter recognition by the mitochondrial RNA polymerase. Promotes transcription initiation from the HSP1 and the light strand promoter by binding immediately upstream of transcriptional start sites. Is able to unwind DNA. Bends the mitochondrial light strand promoter DNA into a U-turn shape via its HMG boxes. Required for maintenance of normal levels of mitochondrial DNA. May play a role in organizing and compacting mitochondrial DNA. This is Transcription factor A, mitochondrial from Homo sapiens (Human).